The following is a 242-amino-acid chain: ATP synthase subunit b 2 (242 aa).

The helical transmembrane segment at 4–24 (LLAISSLTLLASLVLLVVSPA) threads the bilayer. The tract at residues 43-74 (ADSEDGDHDHDHEGDDHGHDEAAGDEHGHGDG) is disordered. Over residues 49–74 (DHDHDHEGDDHGHDEAAGDEHGHGDG) the composition is skewed to basic and acidic residues.

This sequence belongs to the ATPase B chain family. As to quaternary structure, F-type ATPases have 2 components, F(1) - the catalytic core - and F(0) - the membrane proton channel. F(1) has five subunits: alpha(3), beta(3), gamma(1), delta(1), epsilon(1). F(0) has three main subunits: a(1), b(2) and c(10-14). The alpha and beta chains form an alternating ring which encloses part of the gamma chain. F(1) is attached to F(0) by a central stalk formed by the gamma and epsilon chains, while a peripheral stalk is formed by the delta and b chains.

The protein resides in the cell inner membrane. In terms of biological role, f(1)F(0) ATP synthase produces ATP from ADP in the presence of a proton or sodium gradient. F-type ATPases consist of two structural domains, F(1) containing the extramembraneous catalytic core and F(0) containing the membrane proton channel, linked together by a central stalk and a peripheral stalk. During catalysis, ATP synthesis in the catalytic domain of F(1) is coupled via a rotary mechanism of the central stalk subunits to proton translocation. Its function is as follows. Component of the F(0) channel, it forms part of the peripheral stalk, linking F(1) to F(0). This is ATP synthase subunit b 2 from Rhodopirellula baltica (strain DSM 10527 / NCIMB 13988 / SH1).